Reading from the N-terminus, the 350-residue chain is MNILGIETSCDETSGAVLCSGQVRSNVVSSQRCHAHFGGVVPELASREHERLIVSIVDAAVTEANITKNDLDVIAATAGPGLIGAVMVGLCFAQGMAYALQIPFVPVNHIEAHIFSPFIQEDPFHSSPEGAFVSLTVSGGHTLLSVVEPDLSYSVIGRTLDDAAGEAFDKTGKMLGLPYPAGPVIDKLAEKGDPAFHLFPRALTSKSQTSKNYLGNFDFSFSGLKTSVLTWLQKQSAEFIEHHKADIAASIQYAIVSVLVEKTIAAARSRGIKSVSIAGGVSANSALRRAMKEACKREGITLHVPGTVYSTDNAAMIATLAALKLSRGMKAECCYNIAPYASFAAGSRMA.

Fe cation is bound by residues H109 and H113. Substrate-binding positions include 136-140, D169, G182, D186, and N284; that span reads TVSGG. D312 provides a ligand contact to Fe cation.

The protein belongs to the KAE1 / TsaD family. Requires Fe(2+) as cofactor.

The protein resides in the cytoplasm. It carries out the reaction L-threonylcarbamoyladenylate + adenosine(37) in tRNA = N(6)-L-threonylcarbamoyladenosine(37) in tRNA + AMP + H(+). Functionally, required for the formation of a threonylcarbamoyl group on adenosine at position 37 (t(6)A37) in tRNAs that read codons beginning with adenine. Is involved in the transfer of the threonylcarbamoyl moiety of threonylcarbamoyl-AMP (TC-AMP) to the N6 group of A37, together with TsaE and TsaB. TsaD likely plays a direct catalytic role in this reaction. The sequence is that of tRNA N6-adenosine threonylcarbamoyltransferase from Pelodictyon phaeoclathratiforme (strain DSM 5477 / BU-1).